Reading from the N-terminus, the 604-residue chain is ATP-dependent RNA helicase HAS1 (604 aa).

The interval 1–126 (MPVTMETSKE…PQTENEPQKF (126 aa)) is disordered. Residues 11 to 20 (HSKKRKRKHG) show a composition bias toward basic residues. A compositionally biased stretch (polar residues) spans 25–45 (AALTSANAAKSLVKTTLSSKG). A compositionally biased stretch (basic and acidic residues) spans 60–70 (EHPSLMEDRVS). Over residues 73-86 (VVDEPEEVVEEDSE) the composition is skewed to acidic residues. Positions 112-121 (NALSLPQTEN) are enriched in polar residues. The Q motif signature appears at 124-152 (QKFTELNLSEKTLKAIQEMGFETMTEIQR). A Helicase ATP-binding domain is found at 155-331 (IPPLMAGRDV…RISLRPGPLY (177 aa)). An ATP-binding site is contributed by 168–175 (AKTGSGKT). Residues 278–281 (DEAD) carry the DEAD box motif. In terms of domain architecture, Helicase C-terminal spans 345–515 (GLEQGYVICD…NVQSQLEKLI (171 aa)). The disordered stretch occupies residues 570–604 (SLGASMSRDKKQTSRRNYGSQPRHAPKFKRKTSDD). Basic residues predominate over residues 593-604 (HAPKFKRKTSDD).

The protein belongs to the DEAD box helicase family. DDX18/HAS1 subfamily. As to quaternary structure, associates in the nucleolus with the 60S and pre-60S ribosomal subunits.

Its subcellular location is the nucleus. It is found in the nucleolus. It carries out the reaction ATP + H2O = ADP + phosphate + H(+). Functionally, ATP-dependent RNA helicase involved in 40S ribosomal subunit biogenesis. Required for the processing and cleavage of 35S pre-rRNA at sites A0, A1, and A2, leading to mature 18S rRNA. This chain is ATP-dependent RNA helicase HAS1 (HAS1), found in Coccidioides immitis (strain RS) (Valley fever fungus).